Here is a 377-residue protein sequence, read N- to C-terminus: Nitric oxide reductase FlRd-NAD(+) reductase (377 aa).

The protein belongs to the FAD-dependent oxidoreductase family. Requires FAD as cofactor.

Its subcellular location is the cytoplasm. The catalysed reaction is 2 reduced [nitric oxide reductase rubredoxin domain] + NAD(+) + H(+) = 2 oxidized [nitric oxide reductase rubredoxin domain] + NADH. Its pathway is nitrogen metabolism; nitric oxide reduction. In terms of biological role, one of at least two accessory proteins for anaerobic nitric oxide (NO) reductase. Reduces the rubredoxin moiety of NO reductase. The protein is Nitric oxide reductase FlRd-NAD(+) reductase of Escherichia coli (strain 55989 / EAEC).